We begin with the raw amino-acid sequence, 340 residues long: Protein-arginine kinase (340 aa).

Positions 21 to 242 constitute a Phosphagen kinase C-terminal domain; it reads VVLSSRIRLA…EQIIMQERIA (222 aa). ATP is bound by residues 24 to 28, histidine 79, arginine 113, 164 to 168, and 195 to 200; these read SSRIR, RASVM, and RGIYGE.

The protein belongs to the ATP:guanido phosphotransferase family.

The enzyme catalyses L-arginyl-[protein] + ATP = N(omega)-phospho-L-arginyl-[protein] + ADP + H(+). Its function is as follows. Catalyzes the specific phosphorylation of arginine residues in proteins. The protein is Protein-arginine kinase of Listeria monocytogenes serotype 4a (strain HCC23).